The primary structure comprises 38 residues: Large ribosomal subunit protein bL36 (38 aa).

Belongs to the bacterial ribosomal protein bL36 family.

This is Large ribosomal subunit protein bL36 from Prosthecochloris aestuarii (strain DSM 271 / SK 413).